A 176-amino-acid polypeptide reads, in one-letter code: Peptidyl-tRNA hydrolase (176 aa).

TRNA is bound at residue Tyr14. The active-site Proton acceptor is the His19. TRNA-binding residues include Tyr65, Asn67, and Asn113.

Belongs to the PTH family. As to quaternary structure, monomer.

The protein localises to the cytoplasm. It carries out the reaction an N-acyl-L-alpha-aminoacyl-tRNA + H2O = an N-acyl-L-amino acid + a tRNA + H(+). Its function is as follows. Hydrolyzes ribosome-free peptidyl-tRNAs (with 1 or more amino acids incorporated), which drop off the ribosome during protein synthesis, or as a result of ribosome stalling. Functionally, catalyzes the release of premature peptidyl moieties from peptidyl-tRNA molecules trapped in stalled 50S ribosomal subunits, and thus maintains levels of free tRNAs and 50S ribosomes. In Phytoplasma mali (strain AT), this protein is Peptidyl-tRNA hydrolase.